Reading from the N-terminus, the 126-residue chain is Fluoride-specific ion channel FluC 1 (126 aa).

4 helical membrane-spanning segments follow: residues 5–25, 39–59, 69–89, and 100–120; these read FILA…LVGI, TLFI…LFAI, IFLI…SLDS, and AAGA…IAGI. The Na(+) site is built by Gly-77 and Thr-80.

Belongs to the fluoride channel Fluc/FEX (TC 1.A.43) family.

The protein resides in the cell inner membrane. It carries out the reaction fluoride(in) = fluoride(out). With respect to regulation, na(+) is not transported, but it plays an essential structural role and its presence is essential for fluoride channel function. Functionally, fluoride-specific ion channel. Important for reducing fluoride concentration in the cell, thus reducing its toxicity. In Nitrobacter hamburgensis (strain DSM 10229 / NCIMB 13809 / X14), this protein is Fluoride-specific ion channel FluC 1.